We begin with the raw amino-acid sequence, 1790 residues long: Intracellular protein transport protein USO1 (1790 aa).

The tract at residues 1 to 724 is globular head; it reads MDIIQGLIQQ…LSHDPDEEPI (724 aa). ARM repeat units lie at residues 45–89, 127–170, 173–213, 215–260, 261–312, 314–362, 363–429, 431–512, 543–584, and 586–630; these read AFSR…LFIR, QFSL…AVMA, PLKA…MAVV, DSPH…NILK, YNTS…VSLT, EPGN…NMVR, SNEH…LKAY, MDNF…PFKL, GNDL…LIYW, and FGDF…LGVA. Positions 452–484 are disordered; sequence TNNVGDNAKENGGSNKSDKESDSDKDTDGKDGT. The tract at residues 465 to 487 is charged (hyper-hydrophilic); it reads SNKSDKESDSDKDTDGKDGTEYE. Over residues 467 to 484 the composition is skewed to basic and acidic residues; that stretch reads KSDKESDSDKDTDGKDGT. A coiled-coil region spans residues 725 to 1790; sequence NKISFEEVEK…EEDEEEGQVA (1066 aa). A dispensable for the protein function region spans residues 991–1790; the sequence is ESSIQLSNLQ…EEDEEEGQVA (800 aa). Disordered regions lie at residues 1185–1221, 1326–1351, 1485–1547, 1645–1667, 1722–1742, and 1762–1790; these read EITS…SNLK, KEKS…EEQL, GLKK…EDIK, QELD…EVRK, DNLK…SEID, and LKDL…GQVA. Residues 1194–1209 show a composition bias toward basic and acidic residues; the sequence is ESIKKKNDELEGEVKA. Composition is skewed to basic and acidic residues over residues 1485 to 1512, 1519 to 1547, 1655 to 1667, and 1722 to 1738; these read GLKK…KLES, TELK…EDIK, QKSE…EVRK, and DNLK…NEDR. Serine 1770 bears the Phosphoserine mark. Residues 1770 to 1790 are compositionally biased toward acidic residues; sequence SSDEEDDEEDDEEDEEEGQVA.

The protein belongs to the VDP/USO1/EDE1 family. Homodimer. Dimerizes by parallel association of the tails, resulting in an elongated structure with two globular head domains side by side, and a long rod-like tail structure.

It localises to the cytoplasm. The protein resides in the cytoskeleton. It is found in the cytoplasmic vesicle membrane. The protein localises to the endoplasmic reticulum membrane. Its subcellular location is the golgi apparatus membrane. Functionally, required for protein transport from the ER to the Golgi complex. The sequence is that of Intracellular protein transport protein USO1 (USO1) from Saccharomyces cerevisiae (strain ATCC 204508 / S288c) (Baker's yeast).